Here is an 87-residue protein sequence, read N- to C-terminus: Olfactory receptor-like protein HbT2 (87 aa).

The Cytoplasmic segment spans residues 1–8 (KLWRMTGT). A helical membrane pass occupies residues 9-29 (WLGGFCHSIIQIPVIIQLPFC). Residues 30-55 (GPNVIDHYFRDLQPLFKLACTDTFME) lie on the Extracellular side of the membrane. The chain crosses the membrane as a helical span at residues 56–76 (GVIVLAFSGLFSVFSFLILVS). Over 77 to 87 (SYIVILVNLRN) the chain is Cytoplasmic.

Belongs to the G-protein coupled receptor 1 family.

It localises to the cell membrane. Functionally, odorant receptor. The sequence is that of Olfactory receptor-like protein HbT2 from Apis mellifera ligustica (Common honeybee).